A 226-amino-acid polypeptide reads, in one-letter code: Putative N-acetylmannosamine-6-phosphate 2-epimerase 1 (226 aa).

Belongs to the NanE family.

It carries out the reaction an N-acyl-D-glucosamine 6-phosphate = an N-acyl-D-mannosamine 6-phosphate. It participates in amino-sugar metabolism; N-acetylneuraminate degradation; D-fructose 6-phosphate from N-acetylneuraminate: step 3/5. Converts N-acetylmannosamine-6-phosphate (ManNAc-6-P) to N-acetylglucosamine-6-phosphate (GlcNAc-6-P). The sequence is that of Putative N-acetylmannosamine-6-phosphate 2-epimerase 1 from Salmonella paratyphi A (strain ATCC 9150 / SARB42).